A 132-amino-acid chain; its full sequence is uncharacterized protein (132 aa).

This is an uncharacterized protein from Bacillus subtilis (strain 168).